A 333-amino-acid polypeptide reads, in one-letter code: Protein FAM170A (333 aa).

Disordered regions lie at residues 1–45 (MKRR…GVGE), 73–107 (LQDSSKPRSPLDQVPEGEATTAPSQQASSSCPSYK), and 143–214 (ETSE…AKTP). Positions 10–29 (LEIEESKEAGISKSQEDISH) are enriched in basic and acidic residues. Residues 92–105 (TTAPSQQASSSCPS) show a composition bias toward low complexity. Residues 143-156 (ETSESLEKQPRMEE) are compositionally biased toward basic and acidic residues. Polar residues predominate over residues 170 to 179 (SDVSTRNLLS). Basic and acidic residues predominate over residues 185–196 (GEEKEHEEKPES). A Phosphothreonine modification is found at Thr213. Residues 224-248 (FRCMACCRVFATMESLQEHVQYGIR) form a C2H2-type; degenerate zinc finger. Positions 267–333 (MESESTQEEE…RKDHCDNSGS (67 aa)) are disordered. The span at 271 to 281 (STQEEEEDHTE) shows a compositional bias: acidic residues. The span at 282–293 (ETEKPKEEKAEE) shows a compositional bias: basic and acidic residues. At Ser308 the chain carries Phosphoserine.

It belongs to the FAM170 family. As to expression, testis-specific.

It localises to the nucleus. In terms of biological role, acts as a nuclear transcription factor that positively regulates the expression of heat shock genes. Binds to heat shock promoter elements (HSE). This is Protein FAM170A (Fam170a) from Mus musculus (Mouse).